A 159-amino-acid chain; its full sequence is Transcription elongation factor GreA (159 aa).

Residues 14-76 (IKKLENELEY…QLENMLKNAS (63 aa)) are a coiled coil.

It belongs to the GreA/GreB family.

Its function is as follows. Necessary for efficient RNA polymerase transcription elongation past template-encoded arresting sites. The arresting sites in DNA have the property of trapping a certain fraction of elongating RNA polymerases that pass through, resulting in locked ternary complexes. Cleavage of the nascent transcript by cleavage factors such as GreA or GreB allows the resumption of elongation from the new 3'terminus. GreA releases sequences of 2 to 3 nucleotides. The protein is Transcription elongation factor GreA of Clostridium kluyveri (strain NBRC 12016).